The primary structure comprises 562 residues: Membrane protein insertase YidC (562 aa).

Residues 1-21 (MDIKRTILIVALAIVTYVGVL) traverse the membrane as a helical segment. The segment at 42–74 (TAPGIPDTAAGNNGSASADVPSATGNTTSAAPL) is disordered. 5 helical membrane passes run 343–363 (LELTVDYGFLWFIAQPIFWLL), 369–389 (ILGNWGWSIIVLTMLIKGLFF), 439–459 (LGGCLPILVQMPVFLSLYWVL), 470–490 (WILWITDLSIKDPFFILPIIM), and 517–537 (PIIFTFFFLWFPAGLVLYWVV).

This sequence belongs to the OXA1/ALB3/YidC family. Type 1 subfamily. In terms of assembly, interacts with the Sec translocase complex via SecD. Specifically interacts with transmembrane segments of nascent integral membrane proteins during membrane integration.

Its subcellular location is the cell inner membrane. In terms of biological role, required for the insertion and/or proper folding and/or complex formation of integral membrane proteins into the membrane. Involved in integration of membrane proteins that insert both dependently and independently of the Sec translocase complex, as well as at least some lipoproteins. Aids folding of multispanning membrane proteins. This chain is Membrane protein insertase YidC, found in Pseudomonas syringae pv. tomato (strain ATCC BAA-871 / DC3000).